The chain runs to 443 residues: Trigger factor (443 aa).

The 87-residue stretch at 168–254 (GDFVTIDFEG…IKNLKEKKLP (87 aa)) folds into the PPIase FKBP-type domain.

It belongs to the FKBP-type PPIase family. Tig subfamily.

Its subcellular location is the cytoplasm. It carries out the reaction [protein]-peptidylproline (omega=180) = [protein]-peptidylproline (omega=0). Its function is as follows. Involved in protein export. Acts as a chaperone by maintaining the newly synthesized protein in an open conformation. Functions as a peptidyl-prolyl cis-trans isomerase. In Syntrophus aciditrophicus (strain SB), this protein is Trigger factor.